The primary structure comprises 948 residues: RNA polymerase-associated protein RapA (948 aa).

The Helicase ATP-binding domain maps to 164–332; it reads EVADRSAPRV…FARLRLLDPN (169 aa). Residue 177–184 coordinates ATP; the sequence is DEVGLGKT. The DEAH box signature appears at 278–281; sequence DEAH. One can recognise a Helicase C-terminal domain in the interval 473–627; sequence RVDWLIDTLK…TCPTGNALQH (155 aa).

It belongs to the SNF2/RAD54 helicase family. RapA subfamily. As to quaternary structure, interacts with the RNAP. Has a higher affinity for the core RNAP than for the holoenzyme. Its ATPase activity is stimulated by binding to RNAP.

Its function is as follows. Transcription regulator that activates transcription by stimulating RNA polymerase (RNAP) recycling in case of stress conditions such as supercoiled DNA or high salt concentrations. Probably acts by releasing the RNAP, when it is trapped or immobilized on tightly supercoiled DNA. Does not activate transcription on linear DNA. Probably not involved in DNA repair. This is RNA polymerase-associated protein RapA from Pseudomonas putida (strain GB-1).